The primary structure comprises 1391 residues: Axoneme-associated protein mst101(2) (1391 aa).

Disordered stretches follow at residues 170 to 213 (ECNQ…GKKL) and 280 to 300 (SSEPKKKGKKKKNDEKKEKEL). Over residues 184–201 (TKKGKTKGKSGGGNKKRS) the composition is skewed to basic residues. The segment covering 291 to 300 (KNDEKKEKEL) has biased composition (basic and acidic residues). A run of 59 repeats spans residues 332–347 (KKKCKDLGRKMKEEAE), 348–363 (KKKCAALAKKQKEEDE), 364–379 (KKACKELAKKKKEADE), 380–395 (KKKCEEAANKEKKAAE), 396–411 (KKKCEKAAKERKEAAE), 412–427 (KKKCEEAAKKEKEAAE), 428–443 (RKKCEELAKNIKKAAE), 444–459 (KKKCKEAAKKEKEAAE), 460–475 (RKKCEELAKKIKKAAE), 476–491 (KKKCEETAKKGKEVAE), 492–507 (RKKCEELAKKIKKAEI), 508–523 (KKKCKKLAKKEKETAE), 524–539 (KKKCEKAAKKRKEAAE), 540–555 (KKKCEKAAKKRKEAAE), 556–571 (KKKCEKSAKKRKEAAE), 572–587 (KKKCEKAAKERKEAAE), 588–603 (KKKCEEAAKKEKEVAE), 604–619 (RKKCEELAKKIKKAAE), 620–635 (KKKCKEAAKKEKEAAE), 636–651 (REKCGELAKKIKKAAE), 652–667 (KKKCKKLAKKEKETAE), 668–683 (KKKCEKAAKKRKEAAE), 684–699 (KKKCAEAAKKEKEAAE), 700–715 (KKKCEEAAKKEKEAAE), 716–731 (RKKCEELAKKIKKAAE), 732–747 (KKKCKKLAKKKKAGEK), 748–763 (NKLKKGNKKGKKALKE), 764–779 (KKKCRELAKKKAAEKK), 780–795 (KCKEAAKKEKEAAEKK), 796–811 (KCEKTAKKRKEEAEKK), 812–827 (KCEKTAKKRKEAAEKK), 828–843 (KCEKAAKKRKEEAEKK), 844–859 (KCEKTAKKRKETAEKK), 860–875 (KCEKAAKKRKQAAEKK), 876–891 (KCEKAAKKRKEAAEKK), 892–907 (KCAEAAKKEKELAEKK), 908–923 (KCEEAAKKEKEVAERK), 924–939 (KCEELAKKIKKAAEKK), 940–955 (KCKKLAKKEKKAGEKN), 956–971 (KLKKKAGKGKKKCKKL), 972–987 (GKKSKRAAEKKKCAEA), 988–1003 (AKKEKEAATKKKCEER), 1004–1019 (AKKQKEAAEKKQCEER), 1020–1035 (AKKLKEAAEQKQCEER), 1036–1051 (AKKLKEAAEKKQCEER), 1052–1067 (AKKLKEAAEQKQCEER), 1068–1083 (AKKLKEAAEKKQCEER), 1084–1099 (AKKEKEAAEKKQCEER), 1100–1115 (AKKLKEAAEKKQCEER), 1116–1131 (AKKEKEAAEKKRCEEA), 1132–1147 (AKREKEAAEKKKCAEA), 1148–1163 (AKKEKEATEKQKCAEA), 1164–1179 (AKKEKEAAEKKKCAEA), 1180–1195 (AKREKEAAQKKKCADL), 1196–1211 (AKKEQEPAEMKKCEEA), 1212–1227 (AKKEKEAAEKQKCAKA), 1228–1243 (AKKEKEAAEKKKCAEA), 1244–1259 (AKKEQEAAEKKKCAEA), and 1260–1275 (AKKEKEAEKKRKCEKA). A 59 X 16 AA approximate tandem repeats of [KR]-K-X-C-X-X-X-A-K-X-X-K-X-X-X-E region spans residues 332–1275 (KKKCKDLGRK…AEKKRKCEKA (944 aa)). Residues 370 to 429 (LAKKKKEADEKKKCEEAANKEKKAAEKKKCEKAAKERKEAAEKKKCEEAAKKEKEAAERK) form a disordered region. The tract at residues 516-577 (KKEKETAEKK…EAAEKKKCEK (62 aa)) is disordered. Residues 517 to 577 (KEKETAEKKK…EAAEKKKCEK (61 aa)) are compositionally biased toward basic and acidic residues. Residues 729-765 (AAEKKKCKKLAKKKKAGEKNKLKKGNKKGKKALKEKK) are compositionally biased toward basic residues. 3 disordered regions span residues 729–881 (AAEK…EKAA), 900–922 (EKELAEKKKCEEAAKKEKEVAER), and 934–1013 (KAAE…AAEK). Residues 766 to 881 (KCRELAKKKA…AEKKKCEKAA (116 aa)) show a composition bias toward basic and acidic residues. 2 stretches are compositionally biased toward basic residues: residues 934–949 (KAAEKKKCKKLAKKEK) and 956–976 (KLKKKAGKGKKKCKKLGKKSK). Residues 977-1013 (RAAEKKKCAEAAKKEKEAATKKKCEERAKKQKEAAEK) are compositionally biased toward basic and acidic residues. 2 disordered regions span residues 1076-1095 (EKKQCEERAKKEKEAAEKKQ) and 1104-1212 (KEAA…EEAA). The span at 1353 to 1370 (KKEKEAAEKKKRCKDLAK) shows a compositional bias: basic and acidic residues. Residues 1353-1391 (KKEKEAAEKKKRCKDLAKNKKKGHKKKGRNENRKKRTDC) are disordered. Basic residues predominate over residues 1371–1391 (NKKKGHKKKGRNENRKKRTDC).

As to expression, testis. Primary spermatocytes and early spermatids.

It localises to the cytoplasm. Functionally, possible structural role in the sperm tail. The polypeptide is Axoneme-associated protein mst101(2) (mst101(2)) (Drosophila hydei (Fruit fly)).